A 34-amino-acid polypeptide reads, in one-letter code: Antimicrobial peptide Alo-2 (34 aa).

Cystine bridges form between C1–C18, C8–C22, and C17–C33.

The protein localises to the secreted. Has antifungal activity against C.glabrata. The chain is Antimicrobial peptide Alo-2 from Acrocinus longimanus (Giant harlequin beetle).